Consider the following 101-residue polypeptide: Large ribosomal subunit protein uL23 (101 aa).

Belongs to the universal ribosomal protein uL23 family. Part of the 50S ribosomal subunit. Contacts protein L29, and trigger factor when it is bound to the ribosome.

One of the early assembly proteins it binds 23S rRNA. One of the proteins that surrounds the polypeptide exit tunnel on the outside of the ribosome. Forms the main docking site for trigger factor binding to the ribosome. The polypeptide is Large ribosomal subunit protein uL23 (Lactobacillus helveticus (strain DPC 4571)).